A 306-amino-acid chain; its full sequence is Acetyl-coenzyme A carboxylase carboxyl transferase subunit beta (306 aa).

A CoA carboxyltransferase N-terminal domain is found at 25-294 (LWIKDPTSGE…AVNPSNPSPT (270 aa)). The interval 286 to 306 (VNPSNPSPTDSQPPLSKAEAA) is disordered. The span at 287–299 (NPSNPSPTDSQPP) shows a compositional bias: polar residues.

This sequence belongs to the AccD/PCCB family. Acetyl-CoA carboxylase is a heterohexamer composed of biotin carboxyl carrier protein (AccB), biotin carboxylase (AccC) and two subunits each of ACCase subunit alpha (AccA) and ACCase subunit beta (AccD).

Its subcellular location is the cytoplasm. The enzyme catalyses N(6)-carboxybiotinyl-L-lysyl-[protein] + acetyl-CoA = N(6)-biotinyl-L-lysyl-[protein] + malonyl-CoA. The protein operates within lipid metabolism; malonyl-CoA biosynthesis; malonyl-CoA from acetyl-CoA: step 1/1. In terms of biological role, component of the acetyl coenzyme A carboxylase (ACC) complex. Biotin carboxylase (BC) catalyzes the carboxylation of biotin on its carrier protein (BCCP) and then the CO(2) group is transferred by the transcarboxylase to acetyl-CoA to form malonyl-CoA. In Bartonella quintana (strain Toulouse) (Rochalimaea quintana), this protein is Acetyl-coenzyme A carboxylase carboxyl transferase subunit beta.